Reading from the N-terminus, the 503-residue chain is Cobyric acid synthase (503 aa).

Residues 255 to 444 (DIDIAVIRYP…FHDLFHNDAF (190 aa)) enclose the GATase cobBQ-type domain. Cys337 serves as the catalytic Nucleophile. His436 is an active-site residue.

Belongs to the CobB/CobQ family. CobQ subfamily.

It participates in cofactor biosynthesis; adenosylcobalamin biosynthesis. Catalyzes amidations at positions B, D, E, and G on adenosylcobyrinic A,C-diamide. NH(2) groups are provided by glutamine, and one molecule of ATP is hydrogenolyzed for each amidation. The polypeptide is Cobyric acid synthase (Geobacillus sp. (strain WCH70)).